We begin with the raw amino-acid sequence, 347 residues long: GMP reductase (347 aa).

108 to 131 (NDFLKLQRILALSPALRFICVDVA) is an NADP(+) binding site. K(+) contacts are provided by G181 and G183. C186 functions as the Thioimidate intermediate in the catalytic mechanism. An NADP(+)-binding site is contributed by 216–239 (IVGDGGCTCPGDVAKAFGGGADFV).

It belongs to the IMPDH/GMPR family. GuaC type 1 subfamily. Homotetramer.

It catalyses the reaction IMP + NH4(+) + NADP(+) = GMP + NADPH + 2 H(+). In terms of biological role, catalyzes the irreversible NADPH-dependent deamination of GMP to IMP. It functions in the conversion of nucleobase, nucleoside and nucleotide derivatives of G to A nucleotides, and in maintaining the intracellular balance of A and G nucleotides. This is GMP reductase from Tolumonas auensis (strain DSM 9187 / NBRC 110442 / TA 4).